Consider the following 131-residue polypeptide: MRHYEIVFMVHPDQSEQVPGMIERYTGAITEANGKIHRLEDWGRRQLAYPIQDLHKAHYVLMNVEAPAETIEELETAFRFNDAVLRNMVMRTKVAVTEASPMAKAKDERDSRRGPAGDRSYDEANAEEIAE.

The segment at 96–131 (VTEASPMAKAKDERDSRRGPAGDRSYDEANAEEIAE) is disordered. A compositionally biased stretch (basic and acidic residues) spans 104–122 (KAKDERDSRRGPAGDRSYD).

It belongs to the bacterial ribosomal protein bS6 family.

Functionally, binds together with bS18 to 16S ribosomal RNA. The polypeptide is Small ribosomal subunit protein bS6 (Shewanella sp. (strain ANA-3)).